An 833-amino-acid polypeptide reads, in one-letter code: MSRIIIKNIPRYYDKEKLSTYLKSLPQLDAEITDVSVAKTKEGVSRRFAFIGFKNEEDADKAIRYLNKSYVETSRIEVHRALDYRSANEKLRPYSKYASKNIELKLQKKEKEEELRNLEEEKAKKKKDANLKRKFLDTLDPKAREFLKLSSSISNSRSWENEEVFDTEITNPVIPADEDDDEYQDLPAAKRHEGDSIKSTEHDSTLDSGVVIDGREKSSSELHEEESEQAAEGDTAKNSGTDAQAPLSDDEWLRLHRTRIKEKQPEEEVSVVGDELKSFDKENNDEHLERVTNDKIADASMLQKAENNVSEQERNIQLISETKRLFLRNLTYSCAEDDLKSLFGPFGQLEQVHMPIDKKTNNPKGFAYIDFHDADDAVRAYLELDAKPFQGRLLHVLPAKARSSILLDDYALSKLPLKKQRELKRKNTAASSTFSWNSLYMNADAVVTSLASRLGVKKTDILDPTSSDSAVKQALTETHVIQETKNFFEEHGVDLDAFKNAARSDNVLLVKNFPYGTSAEELTSLFSPFGELGRILIPPAGTIAIIEFLNAPDCRQAFSKLAYTRIKSSILYLEKAPRDVFTTSFKQSGKPELAQKVNAVEATTSEKVGTEDIESLDTATIYVKNLNFSTKQEEFQKVFKPLEGYLSAVIRAKPDPKRPGKYLSMGFGFVEFKDKASAVAAMHAMNGFVLDGHKLEIKLSHQGVDAAAEVRKQDSSKPKGTKILIKNLPFEATKKDVQSLLGAYGQLRSVRVPKKFDRSARGFAFAEFVTAREAANAMRALKNTHLLGRHLVLQYASNATMDDMQHAIEKMAKEANAEAAAPSITGKRLIETD.

One can recognise an RRM 1 domain in the interval 2-83; it reads SRIIIKNIPR…SRIEVHRALD (82 aa). The segment at 160–251 is disordered; the sequence is ENEEVFDTEI…DAQAPLSDDE (92 aa). Basic and acidic residues-rich tracts occupy residues 188–205 and 213–222; these read AAKR…HDST and DGREKSSSEL. 4 RRM domains span residues 323-401, 506-578, 619-702, and 721-798; these read KRLF…PAKA, NVLL…KAPR, ATIY…LSHQ, and TKIL…YASN.

This sequence belongs to the RRM MRD1 family.

Its subcellular location is the nucleus. Its function is as follows. Involved in pre-rRNA processing. This is Multiple RNA-binding domain-containing protein 1 (mrd1) from Schizosaccharomyces pombe (strain 972 / ATCC 24843) (Fission yeast).